Reading from the N-terminus, the 1386-residue chain is Pleckstrin homology domain-containing family G member 2 (1386 aa).

Disordered stretches follow at residues 1–21 (MPEG…GCGR) and 36–82 (TAPA…PLPG). Composition is skewed to low complexity over residues 8-17 (LSLSKPSPSL) and 45-62 (SPRG…GSEG). A Phosphoserine modification is found at serine 90. Residues 102-283 (RLERVAREIV…TAVAWYINDM (182 aa)) form the DH domain. Positions 313–411 (ELVLEGAFRG…WIHCLQRLFF (99 aa)) constitute a PH domain. 5 disordered regions span residues 436–540 (KSKP…PSGT), 554–612 (GLRD…PSPL), 701–739 (EPAE…EEGV), 790–815 (ILED…RTAS), and 829–859 (QQMQ…SPCL). Phosphothreonine is present on threonine 445. A phosphoserine mark is found at serine 450 and serine 469. The segment covering 592 to 603 (SEEEEEEEEGLE) has biased composition (acidic residues). 2 positions are modified to phosphoserine: serine 911 and serine 1049. 2 disordered regions span residues 1037-1099 (PVPK…PLPC) and 1162-1191 (TSPK…DTQV). Composition is skewed to polar residues over residues 1048-1059 (ESPTNIPLTKQG) and 1073-1086 (QPIQ…SSLD). Threonine 1257 carries the phosphothreonine modification. Phosphoserine is present on residues serine 1261 and serine 1310. Disordered stretches follow at residues 1291 to 1333 (ARRQ…ARRL) and 1367 to 1386 (TQES…PFHM). Low complexity predominate over residues 1301–1317 (PAASRGSWSSAPTSRAS). Pro residues predominate over residues 1318-1330 (SPPPQPQPPPPPA).

In terms of biological role, may be a transforming oncogene with exchange activity for CDC42. May be a guanine-nucleotide exchange factor (GEF) for RAC1 and CDC42. Activated by the binding to subunits beta and gamma of the heterotrimeric guanine nucleotide-binding protein (G protein). Involved in the regulation of actin polymerization. This is Pleckstrin homology domain-containing family G member 2 (PLEKHG2) from Homo sapiens (Human).